We begin with the raw amino-acid sequence, 350 residues long: Phosphotriesterase-related protein (350 aa).

A divalent metal cation-binding residues include His-22, His-24, Glu-169, His-201, His-230, and Asp-298.

The protein belongs to the metallo-dependent hydrolases superfamily. Phosphotriesterase family. The cofactor is a divalent metal cation.

This chain is Phosphotriesterase-related protein, found in Drosophila willistoni (Fruit fly).